The sequence spans 352 residues: 4-hydroxy-3-methylbut-2-en-1-yl diphosphate synthase (flavodoxin) (352 aa).

C263, C266, C298, and E305 together coordinate [4Fe-4S] cluster.

Belongs to the IspG family. Requires [4Fe-4S] cluster as cofactor.

The enzyme catalyses (2E)-4-hydroxy-3-methylbut-2-enyl diphosphate + oxidized [flavodoxin] + H2O + 2 H(+) = 2-C-methyl-D-erythritol 2,4-cyclic diphosphate + reduced [flavodoxin]. It functions in the pathway isoprenoid biosynthesis; isopentenyl diphosphate biosynthesis via DXP pathway; isopentenyl diphosphate from 1-deoxy-D-xylulose 5-phosphate: step 5/6. Its function is as follows. Converts 2C-methyl-D-erythritol 2,4-cyclodiphosphate (ME-2,4cPP) into 1-hydroxy-2-methyl-2-(E)-butenyl 4-diphosphate. The polypeptide is 4-hydroxy-3-methylbut-2-en-1-yl diphosphate synthase (flavodoxin) (Sulfurimonas denitrificans (strain ATCC 33889 / DSM 1251) (Thiomicrospira denitrificans (strain ATCC 33889 / DSM 1251))).